The chain runs to 373 residues: Dimethylallyltryptophan synthase CymD (373 aa).

3 residues coordinate L-tryptophan: Asp55, Val56, and Glu64. Glu64 acts as the Nucleophile in catalysis. Residues Gln77, Lys146, Trp148, Arg205, and Lys207 each contribute to the dimethylallyl diphosphate site. Residue Arg211 participates in L-tryptophan binding. Tyr274 provides a ligand contact to dimethylallyl diphosphate. Tyr326 contacts L-tryptophan. The dimethylallyl diphosphate site is built by Arg337, Lys339, and Tyr341. One can recognise a FtsK domain in the interval 346-373; the sequence is MHDVTPPPLGVSQQHHLSGQTTARGRTE.

Dimethylallyltryptophan synthase; part of the gene cluster that mediates the biosynthesis of cyclic heptapeptides, known as cyclomarins and also of cyclic dipeptides, called cyclomarazines, which have both antimicrobial and cytotoxic effects. Catalyzes the reverse N-prenylation of monomeric L-tryptophan with dimethylallyl diphosphate (DMAPP) to form N-(1,1-dimethylallyl)-tryptophan (r-N-DMAT). The formation of r-N-DMAT appears to proceed via the deprotonation of the indole nitrogen of tryptophan, which facilitates a nucleophilic attack on the carbocation that is forming on the dimethylallyl group as the diphosphate dissociates. The N-(1,1-dimethylallyl)-tryptophan produced by CymD is combined with a range of standard and nonproteinogenic amino acid substrates to synthesize the peptides, a process that is probably catalyzed by the non-canonical nonribosomal peptide synthetase (NRPS), CymA. Other proteins in the cluster catalyze further modifications of the peptides including CymV which catalyzes the oxidation of olefinic cyclomarins and cyclomarazines to their respective epoxide derivatives. Utilizes only DMAPP as the prenyl donor and has no requirement for divalent cations. The polypeptide is Dimethylallyltryptophan synthase CymD (Salinispora arenicola (strain CNS-205)).